Reading from the N-terminus, the 159-residue chain is 17 kDa surface antigen (159 aa).

A signal peptide spans 1–19 (MKLLSKIMIIALATSMLQA). Cys-20 carries N-palmitoyl cysteine lipidation. Residue Cys-20 is the site of S-diacylglycerol cysteine attachment.

The protein belongs to the rickettsiale 17 kDa surface antigen family.

It is found in the cell outer membrane. This is 17 kDa surface antigen (omp) from Rickettsia conorii (strain ATCC VR-613 / Malish 7).